The chain runs to 508 residues: Aldehyde dehydrogenase family 7 member A1 (508 aa).

244–249 (GSSKVG) is an NAD(+) binding site. The active-site Proton acceptor is glutamate 266. The active-site Nucleophile is cysteine 300.

This sequence belongs to the aldehyde dehydrogenase family. As to quaternary structure, homotetramer.

The catalysed reaction is an aldehyde + NAD(+) + H2O = a carboxylate + NADH + 2 H(+). This Pisum sativum (Garden pea) protein is Aldehyde dehydrogenase family 7 member A1.